A 396-amino-acid chain; its full sequence is 1-deoxy-D-xylulose 5-phosphate reductoisomerase (396 aa).

NADPH is bound by residues Thr17, Gly18, Ser19, Ile20, Asn47, and Asn130. Residue Lys131 participates in 1-deoxy-D-xylulose 5-phosphate binding. Glu132 lines the NADPH pocket. Asp156 contributes to the Mn(2+) binding site. 1-deoxy-D-xylulose 5-phosphate contacts are provided by Ser157, Glu158, Ser182, and His205. A Mn(2+)-binding site is contributed by Glu158. Residue Gly211 participates in NADPH binding. Residues Ser218, Asn223, Lys224, and Glu227 each contribute to the 1-deoxy-D-xylulose 5-phosphate site. Glu227 is a binding site for Mn(2+).

It belongs to the DXR family. Requires Mg(2+) as cofactor. It depends on Mn(2+) as a cofactor.

The enzyme catalyses 2-C-methyl-D-erythritol 4-phosphate + NADP(+) = 1-deoxy-D-xylulose 5-phosphate + NADPH + H(+). It participates in isoprenoid biosynthesis; isopentenyl diphosphate biosynthesis via DXP pathway; isopentenyl diphosphate from 1-deoxy-D-xylulose 5-phosphate: step 1/6. Catalyzes the NADPH-dependent rearrangement and reduction of 1-deoxy-D-xylulose-5-phosphate (DXP) to 2-C-methyl-D-erythritol 4-phosphate (MEP). The protein is 1-deoxy-D-xylulose 5-phosphate reductoisomerase of Rhizobium etli (strain CIAT 652).